Reading from the N-terminus, the 147-residue chain is Molybdopterin synthase catalytic subunit 1 (147 aa).

Substrate-binding positions include 43–45 (NVR), 109–110 (HR), K125, and 132–134 (KKE).

It belongs to the MoaE family. As to quaternary structure, heterotetramer of 2 MoaD subunits and 2 MoaE subunits. Also stable as homodimer. The enzyme changes between these two forms during catalysis.

It carries out the reaction 2 [molybdopterin-synthase sulfur-carrier protein]-C-terminal-Gly-aminoethanethioate + cyclic pyranopterin phosphate + H2O = molybdopterin + 2 [molybdopterin-synthase sulfur-carrier protein]-C-terminal Gly-Gly + 2 H(+). It functions in the pathway cofactor biosynthesis; molybdopterin biosynthesis. Converts molybdopterin precursor Z into molybdopterin. This requires the incorporation of two sulfur atoms into precursor Z to generate a dithiolene group. The sulfur is provided by MoaD. The protein is Molybdopterin synthase catalytic subunit 1 (moaE1) of Mycobacterium tuberculosis (strain ATCC 25618 / H37Rv).